Here is a 390-residue protein sequence, read N- to C-terminus: Putative methylesterase 11, chloroplastic (390 aa).

The N-terminal 46 residues, 1–46 (MGNLCSLFTPPKPVKKRKPITKRQSSIGASSSGSGLNSNRWNNRVR), are a transit peptide targeting the chloroplast. Disordered stretches follow at residues 1–52 (MGNL…SSRR) and 94–119 (QGSC…DPLL). Low complexity predominate over residues 25–48 (SSIGASSSGSGLNSNRWNNRVRSS). Positions 94 to 104 (QGSCSKKNQLP) are enriched in polar residues. Over residues 105 to 114 (RSSSSRSRSS) the composition is skewed to low complexity. Residues 137-241 (NHFVLVHGGS…KAVFLAAAML (105 aa)) form the AB hydrolase-1 domain. The Acyl-ester intermediate role is filled by D213. Residues D339 and H367 each act as charge relay system in the active site.

It belongs to the AB hydrolase superfamily. Methylesterase family.

The protein resides in the plastid. The protein localises to the chloroplast. In terms of biological role, putative methylesterase. This Arabidopsis thaliana (Mouse-ear cress) protein is Putative methylesterase 11, chloroplastic.